A 318-amino-acid chain; its full sequence is Beta-sarcoglycan (318 aa).

The disordered stretch occupies residues methionine 1 to valine 32. Residues methionine 1–alanine 65 lie on the Cytoplasmic side of the membrane. Residues serine 21–valine 32 show a composition bias toward basic and acidic residues. Residues isoleucine 66–isoleucine 86 traverse the membrane as a helical; Signal-anchor for type II membrane protein segment. The Extracellular portion of the chain corresponds to tryptophan 87–histidine 318. Residues asparagine 158, asparagine 211, and asparagine 258 are each glycosylated (N-linked (GlcNAc...) asparagine). Disulfide bonds link cysteine 288–cysteine 314 and cysteine 290–cysteine 307.

This sequence belongs to the sarcoglycan beta/delta/gamma/zeta family. Cross-link to form 2 major subcomplexes: one consisting of SGCB, SGCD and SGCG and the other consisting of SGCB and SGCD. The association between SGCB and SGCG is particularly strong while SGCA is loosely associated with the other sarcoglycans. Post-translationally, disulfide bonds are present. In terms of tissue distribution, highest expression in heart and skeletal muscle. Low expression in brain, kidney, placenta, pancreas and lung. High expression in fetal brain. Also found in fetal lung, kidney and liver.

The protein localises to the cell membrane. It localises to the sarcolemma. Its subcellular location is the cytoplasm. The protein resides in the cytoskeleton. Its function is as follows. Component of the sarcoglycan complex, a subcomplex of the dystrophin-glycoprotein complex which forms a link between the F-actin cytoskeleton and the extracellular matrix. This chain is Beta-sarcoglycan (SGCB), found in Homo sapiens (Human).